The chain runs to 358 residues: F-box only protein 25 (358 aa).

The interaction with beta-actin stretch occupies residues 1 to 83 (MPFLGQDWRS…NDTNTQSFYR (83 aa)). In terms of domain architecture, F-box spans 226–274 (LTLSDLPLHMLNNILYRFSDGWDIITLGQVTPTLYMLSEDRQLWKKLCQ).

As to quaternary structure, part of a SCF (SKP1-cullin-F-box) protein ligase complex consisting of FBXO25, SKP1, CUL1 and RBX1. Interacts directly with SKP1 and CUL1. Interacts (via C-terminus) with beta-actin (via N-terminus).

It is found in the nucleus. Its pathway is protein modification; protein ubiquitination. In terms of biological role, substrate-recognition component of the SCF (SKP1-CUL1-F-box protein)-type E3 ubiquitin ligase complex. May play a role in accumulation of expanded polyglutamine (polyQ) protein huntingtin (HTT). The polypeptide is F-box only protein 25 (FBXO25) (Macaca fascicularis (Crab-eating macaque)).